We begin with the raw amino-acid sequence, 139 residues long: Large ribosomal subunit protein uL16 (139 aa).

The protein belongs to the universal ribosomal protein uL16 family. Part of the 50S ribosomal subunit.

In terms of biological role, binds 23S rRNA and is also seen to make contacts with the A and possibly P site tRNAs. The polypeptide is Large ribosomal subunit protein uL16 (Treponema pallidum (strain Nichols)).